Here is a 756-residue protein sequence, read N- to C-terminus: MASAPPASPPGSEPPGPDPEPGGPDGPGAAQLAPGPAELRLGAPVGGPDPQSPGLDEPAPGAAADGGARWSAGPAPGLEGGPRDPGPSAPPPRSGPRGQLASPDAPGPGPRSEAPLPELDPLFSWTEEPEECGPASCPESAPFRLQGSSSSHRARGEVDVFSPFPAPTAGELALEQGPGSPPQPSDLSQTHPLPSEPVGSQEDGPRLRAVFDALDGDGDGFVRIEDFIQFATVYGAEQVKDLTKYLDPSGLGVISFEDFYQGITAIRNGDPDGQCYGGVASAQDEEPLACPDEFDDFVTYEANEVTDSAYMGSESTYSECETFTDEDTSTLVHPELQPEGDADSAGGSAVPSECLDAMEEPDHGALLLLPGRPHPHGQSVITVIGGEEHFEDYGEGSEAELSPETLCNGQLGCSDPAFLTPSPTKRLSSKKVARYLHQSGALTMEALEDPSPELMEGPEEDIADKVVFLERRVLELEKDTAATGEQHSRLRQENLQLVHRANALEEQLKEQELRACEMVLEETRRQKELLCKMEREKSIEIENLQTRLQQLDEENSELRSCTPCLKANIERLEEEKQKLLDEIESLTLRLSEEQENKRRMGDRLSHERHQFQRDKEATQELIEDLRKQLEHLQLLKLEAEQRRGRSSSMGLQEYHSRARESELEQEVRRLKQDNRNLKEQNEELNGQIITLSIQGAKSLFSTAFSESLAAEISSVSRDELMEAIQKQEEINFRLQDYIDRIIVAIMETNPSILEVK.

The segment covering 1–24 (MASAPPASPPGSEPPGPDPEPGGP) has biased composition (pro residues). Residues 1-204 (MASAPPASPP…SEPVGSQEDG (204 aa)) form a disordered region. The important for binding to DYNC1LI1 stretch occupies residues 2–435 (ASAPPASPPG…RLSSKKVARY (434 aa)). The segment covering 27 to 39 (PGAAQLAPGPAEL) has biased composition (low complexity). Phosphoserine is present on S52. Positions 53 to 68 (PGLDEPAPGAAADGGA) are enriched in low complexity. Positions 84–94 (DPGPSAPPPRS) are enriched in pro residues. The residue at position 102 (S102) is a Phosphoserine; by CDK1. EF-hand domains lie at 202–237 (EDGP…YGAE) and 234–269 (YGAE…IRNG). Residues D215, D217, D219, D226, D247, S249, and D258 each contribute to the Ca(2+) site. S281, S348, S488, S538, S647, and S648 each carry phosphoserine. The interval 484 to 588 (GEQHSRLRQE…LLDEIESLTL (105 aa)) is ARF-binding domain (ABD). A coiled-coil region spans residues 485 to 694 (EQHSRLRQEN…NGQIITLSIQ (210 aa)). Residues 645–664 (RSSSMGLQEYHSRARESELE) form a disordered region. Residues 654–664 (YHSRARESELE) are compositionally biased toward basic and acidic residues. The FIP-RBD domain maps to 694–756 (QGAKSLFSTA…ETNPSILEVK (63 aa)).

Homodimer. Interacts with RAB11A; the interaction is direct and is required for the recruitment to endosomes. Interacts with RAB11B. Forms a ternary complex with RAB11A and dynein intermediate chain DYNC1LI1; RAB11FIP3 links RAB11A to dynein and the interaction regulates endocytic trafficking. Interacts with dynein intermediate chain and dynactin (DCTN1); the interaction activates dynein processivity. Interacts with ARF6 and EXOC7; the interaction serves for recruitment and tethering of recycling endosomes-derived vesicles to the cleavage furrow/midbody. Interacts with RACGAP1/MgcRacGAP; the interaction occurs at late telophase and is required for recruitment and tethering of recycling endosomes-derived vesicles to the cleavage furrow/midbody. Forms a complex with RAB11A and Rabin8/RAB3IP, probably a heterohexamer with two of each protein subunit, where RAB3IP and RAB11FIP3 simultaneously bind to RAB11A; the complex promotes preciliary trafficking. Forms a complex containing RAB11A, ASAP1, RAB3IP, RAP11FIP3 and ARF4; the complex promotes preciliary trafficking; the complex binds to RHO in photoreceptor cells and promotes RHO ciliary transport. Interacts with RAB11FIP4. Interacts with RAB25. In terms of processing, phosphorylated at Ser-102 by CDK1 during metaphase, and dephosphorylated as cells enter telophase.

The protein localises to the endosome membrane. Its subcellular location is the recycling endosome membrane. The protein resides in the cytoplasm. It is found in the cytoskeleton. It localises to the microtubule organizing center. The protein localises to the centrosome. Its subcellular location is the cleavage furrow. The protein resides in the midbody. It is found in the golgi apparatus membrane. It localises to the golgi apparatus. The protein localises to the trans-Golgi network membrane. In terms of biological role, downstream effector molecule for Rab11 GTPase which is involved in endocytic trafficking, cytokinesis and intracellular ciliogenesis by participating in membrane delivery. Recruited by Rab11 to endosomes where it links Rab11 to dynein motor complex. The functional Rab11-RAB11FIP3-dynein complex regulates the movement of peripheral sorting endosomes (SE) along microtubule tracks toward the microtubule organizing center/centrosome, generating the endocytic recycling compartment (ERC) during interphase of cell cycle. Facilitates the interaction between dynein and dynactin and activates dynein processivity. Binding with ASAP1 is needed to regulate the pericentrosomal localization of recycling endosomes. The Rab11-RAB11FIP3 complex is also implicated in the transport during telophase of vesicles derived from recycling endosomes to the cleavage furrow via centrosome-anchored microtubules, where the vesicles function to deliver membrane during late cytokinesis and abscission. The recruitment of Rab11-RAB11FIP3-containing endosomes to the cleavage furrow and tethering to the midbody is co-mediated by RAB11FIP3 interaction with ARF6-exocyst and RACGAP1-MKLP1 tethering complexes. Also involved in the Rab11-Rabin8-Rab8 ciliogenesis cascade by facilitating the orderly assembly of a ciliary targeting complex containing Rab11, ASAP1, Rabin8/RAB3IP, RAB11FIP3 and ARF4, which directs preciliary vesicle trafficking to mother centriole and ciliogenesis initiation. Also promotes the activity of Rab11 and ASAP1 in the ARF4-dependent Golgi-to-cilia transport of the sensory receptor rhodopsin. Competes with WDR44 for binding to Rab11, which controls intracellular ciliogenesis pathway. May play a role in breast cancer cell motility by regulating actin cytoskeleton. This chain is Rab11 family-interacting protein 3, found in Homo sapiens (Human).